Consider the following 129-residue polypeptide: MANLNQIQKEVSEILSDQKSMKADIKAILELLGSQNPIKESLETVAAKIVNDLTKLINDCPCNKEILEALGTQPKEQLIEQPKEKGKGLNLGKYSYPNYGVGNEELGSSGNPKALTWPFKAPAGWPNQF.

2 coiled-coil regions span residues 1 to 31 (MANL…ILEL) and 38 to 59 (IKES…LIND). Residues 122–129 (PAGWPNQF) are capsid binding.

The protein belongs to the caulimovirus ORF III family. In terms of assembly, homotetramer, through coiled-coil domain. Homotrimer when bound on icosehadral capsid. Interacts with capsid protein, and with movement protein.

It is found in the virion. It localises to the host cell junction. The protein localises to the host plasmodesma. Functionally, plays a role in virus cell-to-cell and plant-to-plant transmission. Interacts with virion icosahedral capsid and movement protein, thereby facilitating virion cell-to-cell transmission through plasmodesmata opened by viral movement protein. Also interacts with aphid transmission factor, attaching the virion to aphid stylet when the animal feeds on an virus infected plant. Aphid saliva may later detach the virion, inducing release of infectious particles when the animal feeds on a new plant. This Cauliflower mosaic virus (strain Strasbourg) (CaMV) protein is Virion-associated protein.